Reading from the N-terminus, the 505-residue chain is Peroxisome proliferator-activated receptor gamma (505 aa).

Thr84 is a glycosylation site (O-linked (GlcNAc) threonine). Residue Ser112 is modified to Phosphoserine; by MAPK. The nuclear receptor DNA-binding region spans 136–210 (AIECRVCGDK…VGMSHNAIRF (75 aa)). NR C4-type zinc fingers lie at residues 139–159 (CRVC…CEGC) and 176–198 (CDLN…FQKC). Residues 205–280 (HNAIRFGRMP…DKSPFVIYDM (76 aa)) form an interaction with FAM120B region. The NR LBD domain maps to 238-503 (DLRALAKHLY…HPLLQEIYKD (266 aa)). Residue Lys252 forms a Glycyl lysine isopeptide (Lys-Gly) (interchain with G-Cter in ubiquitin) linkage. A 9aaTAD motif is present at residues 495-503 (PLLQEIYKD).

Belongs to the nuclear hormone receptor family. NR1 subfamily. In terms of assembly, interacts with FOXO1 (acetylated form). Heterodimer with other nuclear receptors, such as RXRA. The heterodimer with the retinoic acid receptor RXRA is called adipocyte-specific transcription factor ARF6. Interacts with NCOA6 coactivator, leading to a strong increase in transcription of target genes. Interacts with coactivator PPARBP, leading to a mild increase in transcription of target genes. Interacts with NOCA7 in a ligand-inducible manner. Interacts with NCOA1 and NCOA2 LXXLL motifs. Interacts with ASXL1, ASXL2, DNTTIP2, FAM120B, MAP2K1/MEK1, NR0B2, PDPK1, PRDM16, PRMT2 and TGFB1I1. Interacts (when activated by agonist) with PPP5C. Interacts with HELZ2 and THRAP3; the interaction stimulates the transcriptional activity of PPARG. Interacts with PER2, the interaction is ligand dependent and blocks PPARG recruitment to target promoters. Interacts with NOCT. Interacts with ACTN4. Interacts (when in the liganded conformation) with GPS2. Interacts with CRY1 and CRY2 in a ligand-dependent manner. In the absence of hormonal ligand, interacts with TACC1. In macrophages, interacts with PAQR3 and STUB1; the interactions promote PPARG poylubiquitination and STUB1-mediated degradation. In terms of processing, phosphorylated by MAPK. The phosphorylation inhibits PPAR gamma activity. Post-translationally, O-GlcNAcylation at Thr-84 reduces transcriptional activity in adipocytes. Phosphorylated at basal conditions and dephosphorylated when treated with the ligand. May be dephosphorylated by PPP5C. The phosphorylated form may be inactive and dephosphorylation at induces adipogenic activity. In terms of processing, ubiquitinated by E3 ubiquitin-protein ligase complex containing FBXO9; leading to proteasomal degradation. Ubiquitinated at Lys-252 by TRIM55 leading to proteasomal degradation. Ubiquitinated by E3 ubiquitin-protein ligase STUB1/CHIP; leading to proteasomal degradation. Highest expression in adipose tissue.

The protein resides in the nucleus. The protein localises to the cytoplasm. With respect to regulation, PDPK1 activates its transcriptional activity independently of its kinase activity. Functionally, nuclear receptor that binds peroxisome proliferators such as hypolipidemic drugs and fatty acids. Once activated by a ligand, the nuclear receptor binds to DNA specific PPAR response elements (PPRE) and modulates the transcription of its target genes, such as acyl-CoA oxidase. It therefore controls the peroxisomal beta-oxidation pathway of fatty acids. Key regulator of adipocyte differentiation and glucose homeostasis. ARF6 acts as a key regulator of the tissue-specific adipocyte P2 (aP2) enhancer. Acts as a critical regulator of gut homeostasis by suppressing NF-kappa-B-mediated pro-inflammatory responses. Plays a role in the regulation of cardiovascular circadian rhythms by regulating the transcription of BMAL1 in the blood vessels. In Rattus norvegicus (Rat), this protein is Peroxisome proliferator-activated receptor gamma (Pparg).